A 95-amino-acid polypeptide reads, in one-letter code: HssA/B-like protein 45 (95 aa).

The interval 1–31 (MTLFSSISSISNPMTSSKSSIASFGSGTSMS) is disordered.

This sequence belongs to the hssA/B family.

This is HssA/B-like protein 45 (hssl45) from Dictyostelium discoideum (Social amoeba).